Reading from the N-terminus, the 330-residue chain is WRKY transcription factor WRKY51 (330 aa).

The tract at residues 39-61 (QTGTSERSPAPAPAQEQQQQQQV) is disordered. Low complexity predominate over residues 51-60 (PAQEQQQQQQ). The Nuclear localization signal motif lies at 74–81 (FKKVISML). Disordered regions lie at residues 91 to 117 (RGPV…SAVS) and 302 to 330 (YEGE…LPLA). The span at 101–117 (PAASEPAPVRSSPSAVS) shows a compositional bias: low complexity. Positions 245–311 (KVADIPADDF…YEGEHRHTPS (67 aa)) form a DNA-binding region, WRKY. The segment covering 318–330 (PPAPPPPLALPLA) has biased composition (pro residues).

Belongs to the WRKY group II-a family. As to expression, highly expressed in aleurone cells. In seeds, predominantly present in the plumule, radicle and scutellum of the embryo.

Its subcellular location is the nucleus. Functionally, transcription factor. Interacts, when in complex with WRKY71, specifically with the W box (5'-(T)TGAC[CT]-3'), a frequently occurring elicitor-responsive cis-acting element. Represses specifically gibberellic acid (GA)-induced promoters in aleurone cells, probably by interfering with GAM1. This chain is WRKY transcription factor WRKY51, found in Oryza sativa subsp. indica (Rice).